The following is a 248-amino-acid chain: Killer cell lectin-like receptor subfamily I member 1 (248 aa).

The Cytoplasmic segment spans residues 1–80 (MLHSKRREYT…RQGPKSTVWR (80 aa)). Short sequence motifs (ITIM motif) lie at residues 16-21 (VTYTEL) and 47-52 (LKYGEL). The helical; Signal-anchor for type II membrane protein transmembrane segment at 81–101 (VVTGMLGALCVVLMTTTGILL) threads the bilayer. Over 102-248 (PKLFSSQEEQ…KKSYICEFNI (147 aa)) the chain is Extracellular. 3 disulfide bridges follow: Cys132–Cys145, Cys161–Cys244, and Cys223–Cys236. In terms of domain architecture, C-type lectin spans 139-245 (FGNNFYCVFK…CSAKKSYICE (107 aa)). 3 N-linked (GlcNAc...) asparagine glycosylation sites follow: Asn197, Asn214, and Asn220.

In terms of assembly, heterodimer with KLRE1. Interacts with PTPN6. In terms of tissue distribution, expressed in natural killer (NK) cells.

It localises to the cell membrane. Its function is as follows. Lectin-like receptor for natural killer (NK) cells. Heterodimer formation with KLRE1 mediates inhibition of NK cell cytolytic activity. This chain is Killer cell lectin-like receptor subfamily I member 1, found in Mus musculus (Mouse).